The chain runs to 561 residues: Oligo-1,6-glucosidase 1 (561 aa).

Ca(2+)-binding residues include Asp-20, Asn-22, Asp-24, Phe-26, and Asp-28. The active-site Nucleophile is the Asp-199. Catalysis depends on Glu-255, which acts as the Proton donor.

The protein belongs to the glycosyl hydrolase 13 family.

It localises to the cytoplasm. The catalysed reaction is Hydrolysis of (1-&gt;6)-alpha-D-glucosidic linkages in some oligosaccharides produced from starch and glycogen by alpha-amylase, and in isomaltose.. Functionally, hydrolyzes various disaccharides such as sucrose, maltose, and isomaltose with different efficiencies. Also hydrolyzes longer maltodextrins from maltotriose up to maltohexaose, but not maltoheptaose, palatinose, isomaltotriose, or isomaltotetraose. This Bacillus subtilis (strain 168) protein is Oligo-1,6-glucosidase 1 (malL).